A 193-amino-acid chain; its full sequence is dTTP/UTP pyrophosphatase (193 aa).

Aspartate 75 (proton acceptor) is an active-site residue.

Belongs to the Maf family. YhdE subfamily. A divalent metal cation serves as cofactor.

The protein localises to the cytoplasm. It carries out the reaction dTTP + H2O = dTMP + diphosphate + H(+). The catalysed reaction is UTP + H2O = UMP + diphosphate + H(+). Nucleoside triphosphate pyrophosphatase that hydrolyzes dTTP and UTP. May have a dual role in cell division arrest and in preventing the incorporation of modified nucleotides into cellular nucleic acids. This is dTTP/UTP pyrophosphatase from Chlorobium luteolum (strain DSM 273 / BCRC 81028 / 2530) (Pelodictyon luteolum).